Here is a 289-residue protein sequence, read N- to C-terminus: Ribonuclease Z (289 aa).

Zn(2+)-binding residues include His63, His65, Asp67, His68, His143, Asp197, and His255. Asp67 serves as the catalytic Proton acceptor.

It belongs to the RNase Z family. In terms of assembly, homodimer. It depends on Zn(2+) as a cofactor.

It catalyses the reaction Endonucleolytic cleavage of RNA, removing extra 3' nucleotides from tRNA precursor, generating 3' termini of tRNAs. A 3'-hydroxy group is left at the tRNA terminus and a 5'-phosphoryl group is left at the trailer molecule.. Zinc phosphodiesterase, which displays some tRNA 3'-processing endonuclease activity. Probably involved in tRNA maturation, by removing a 3'-trailer from precursor tRNA. The polypeptide is Ribonuclease Z (Azobacteroides pseudotrichonymphae genomovar. CFP2).